Consider the following 471-residue polypeptide: L-lysine 2,3-aminomutase (471 aa).

One can recognise a Radical SAM core domain in the interval 120-332; it reads HRYPDRVLFL…GLRGHTSGYA (213 aa). C134, C138, and C141 together coordinate [4Fe-4S] cluster. K346 carries the post-translational modification N6-(pyridoxal phosphate)lysine.

Belongs to the radical SAM superfamily. KamA family. As to quaternary structure, homotetramer. [4Fe-4S] cluster serves as cofactor. Requires pyridoxal 5'-phosphate as cofactor.

It catalyses the reaction L-lysine = (3S)-3,6-diaminohexanoate. It participates in amino-acid degradation; L-lysine degradation via acetate pathway. Functionally, catalyzes the interconversion of L-alpha-lysine and L-beta-lysine. The sequence is that of L-lysine 2,3-aminomutase (kamA) from Bacillus subtilis (strain 168).